The sequence spans 315 residues: Olfactory receptor 56A3 (315 aa).

At 1 to 29 (MTTHRNDTLSTEASDFLLNCFVRSPSWQH) the chain is on the extracellular side. An N-linked (GlcNAc...) asparagine glycan is attached at N6. A helical membrane pass occupies residues 30–50 (WLSLPLSLLFLLAVGANTTLL). At 51 to 58 (MTIWLEAS) the chain is on the cytoplasmic side. Residues 59 to 79 (LHQPLYYLLSLLSLLDIVLCL) form a helical membrane-spanning segment. The Extracellular portion of the chain corresponds to 80–103 (TVIPKVLTIFWFDLRPISFPACFL). C101 and C193 are disulfide-bonded. The chain crosses the membrane as a helical span at residues 104-124 (QMYIMNCFLAMESCTFMVMAY). The Cytoplasmic segment spans residues 125 to 143 (DRYVAICHPLRYPSIITDH). The chain crosses the membrane as a helical span at residues 144 to 164 (FVVKAAMFILTRNVLMTLPIP). Residues 165–200 (ILSAQLRYCGRNVIENCICANMSVSRLSCDDVTINH) lie on the Extracellular side of the membrane. N-linked (GlcNAc...) asparagine glycosylation is present at N185. Residues 201 to 221 (LYQFAGGWTLLGSDLILIFLS) form a helical membrane-spanning segment. Topologically, residues 222-241 (YTFILRAVLRLKAEGAVAKA) are cytoplasmic. The helical transmembrane segment at 242-262 (LSTCGSHFMLILFFSTILLVF) threads the bilayer. Over 263–277 (VLTHVAKKKVSPDVP) the chain is Extracellular. Residues 278–298 (VLLNVLHHVIPAALNPIIYGV) form a helical membrane-spanning segment. Residues 299–315 (RTQEIKQGMQRLLKKGC) lie on the Cytoplasmic side of the membrane.

Belongs to the G-protein coupled receptor 1 family.

It localises to the cell membrane. In terms of biological role, odorant receptor. The polypeptide is Olfactory receptor 56A3 (OR56A3) (Homo sapiens (Human)).